The chain runs to 414 residues: WW domain-containing oxidoreductase (414 aa).

The segment at 1–23 (MAALKYAGLEDTDSEEELPPGWE) is disordered. The 34-residue stretch at 16-49 (EELPPGWEERTTKDGWVYYANHLEEKTQWEHPKS) folds into the WW 1 domain. The Nuclear localization signal signature appears at 50-55 (GKRKRV). In terms of domain architecture, WW 2 spans 57-90 (GGLPYGWEQETDENGQVYFVDHINKRTTYLDPRL). 131–137 (GANSGIG) contacts NADP(+). Substrate is bound at residue Ser-260. Tyr-293 (proton acceptor) is an active-site residue.

Belongs to the short-chain dehydrogenases/reductases (SDR) family.

Its subcellular location is the cytoplasm. The protein resides in the mitochondrion. The protein localises to the golgi apparatus. It is found in the lysosome. Its function is as follows. Putative oxidoreductase. Acts as a tumor suppressor and plays a role in apoptosis. May function synergistically with p53/TP53 to control genotoxic stress-induced cell death. Plays a role in TGFB1 signaling and TGFB1-mediated cell death. May also play a role in tumor necrosis factor (TNF)-mediated cell death. Required for normal bone development. Inhibits Wnt signaling. The polypeptide is WW domain-containing oxidoreductase (WWOX) (Gallus gallus (Chicken)).